A 410-amino-acid chain; its full sequence is Lissencephaly-1 homolog A (410 aa).

Residues 7–39 form the LisH domain; sequence QRDELNRAIADYLRSNGYEEAYSVFKKEAELDM. Residues 56–83 are a coiled coil; that stretch reads TSVIRLQKKVMELESKLNEAKEEINIGG. 7 WD repeats span residues 106 to 145, 148 to 187, 190 to 229, 232 to 271, 274 to 333, 336 to 375, and 378 to 410; these read GHRS…FERT, GHTD…CIRT, GHDH…CVKT, GHRE…CKAE, EHEH…CLMT, GHDN…CTKT, and AHEH…WECR.

It belongs to the WD repeat LIS1/nudF family. Can self-associate. Component of the cytosolic PAF-AH (I) heterotetrameric enzyme, which is composed of PAFAH1B1 (beta), PAFAH1B2 (alpha2) and PAFAH1B3 (alpha1) subunits. The catalytic activity of the enzyme resides in the alpha1 (PAFAH1B3) and alpha2 (PAFAH1B2) subunits, whereas the beta subunit (PAFAH1B1) has regulatory activity. Trimer formation is not essential for the catalytic activity. Interacts with dynein, dynactin, nde1 and ndel1.

Its subcellular location is the cytoplasm. It is found in the cytoskeleton. The protein localises to the microtubule organizing center. It localises to the centrosome. In terms of biological role, regulatory subunit (beta subunit) of the cytosolic type I platelet-activating factor (PAF) acetylhydrolase (PAF-AH (I)), an enzyme that catalyzes the hydrolyze of the acetyl group at the sn-2 position of PAF and its analogs and participates in PAF inactivation. Regulates the PAF-AH (I) activity in a catalytic dimer composition-dependent manner. Positively regulates the activity of the minus-end directed microtubule motor protein dynein. May enhance dynein-mediated microtubule sliding by targeting dynein to the microtubule plus end. Required for several dynein- and microtubule-dependent processes such as the maintenance of Golgi integrity, the peripheral transport of microtubule fragments and the coupling of the nucleus and centrosome. May be required for proliferation of neuronal precursors and neuronal migration. This chain is Lissencephaly-1 homolog A (pafah1b1a), found in Danio rerio (Zebrafish).